The following is a 195-amino-acid chain: Holliday junction branch migration complex subunit RuvA (195 aa).

The tract at residues 1 to 66 (MNYLVFKVIY…LIIKDLYGFR (66 aa)) is domain I. Residues 67-141 (TYNERLLFID…KYINKVSEKN (75 aa)) are domain II. Asn-141 is a region of interest (flexible linker). The interval 141–195 (NPWAKELSIGLENLGYDKKDIEYAITKVKVDTQQNIDISEIIGCAIKEISLRHEN) is domain III.

The protein belongs to the RuvA family. Homotetramer. Forms an RuvA(8)-RuvB(12)-Holliday junction (HJ) complex. HJ DNA is sandwiched between 2 RuvA tetramers; dsDNA enters through RuvA and exits via RuvB. An RuvB hexamer assembles on each DNA strand where it exits the tetramer. Each RuvB hexamer is contacted by two RuvA subunits (via domain III) on 2 adjacent RuvB subunits; this complex drives branch migration. In the full resolvosome a probable DNA-RuvA(4)-RuvB(12)-RuvC(2) complex forms which resolves the HJ.

It is found in the cytoplasm. Functionally, the RuvA-RuvB-RuvC complex processes Holliday junction (HJ) DNA during genetic recombination and DNA repair, while the RuvA-RuvB complex plays an important role in the rescue of blocked DNA replication forks via replication fork reversal (RFR). RuvA specifically binds to HJ cruciform DNA, conferring on it an open structure. The RuvB hexamer acts as an ATP-dependent pump, pulling dsDNA into and through the RuvAB complex. HJ branch migration allows RuvC to scan DNA until it finds its consensus sequence, where it cleaves and resolves the cruciform DNA. This chain is Holliday junction branch migration complex subunit RuvA, found in Ureaplasma urealyticum serovar 10 (strain ATCC 33699 / Western).